The sequence spans 638 residues: Growth hormone receptor (638 aa).

The signal sequence occupies residues 1-18 (MDLWQLLLTLALAGSSDA). Residues 19-264 (FSGSEATAAI…SQFTCEEDFY (246 aa)) lie on the Extracellular side of the membrane. Asparagine 46 carries N-linked (GlcNAc...) asparagine glycosylation. Cystine bridges form between cysteine 56-cysteine 66 and cysteine 101-cysteine 112. Asparagine 115 is a glycosylation site (N-linked (GlcNAc...) asparagine). A disulfide bridge connects residues cysteine 126 and cysteine 140. Positions 151–254 (PPIALNWTLL…EVLYVTLPQM (104 aa)) constitute a Fibronectin type-III domain. Residues asparagine 156, asparagine 161, and asparagine 200 are each glycosylated (N-linked (GlcNAc...) asparagine). The WSXWS motif motif lies at 240-244 (YGEFS). The interval 260–262 (EED) is required for ADAM17-mediated proteolysis. The helical transmembrane segment at 265-288 (FPWLLIIIFGIFGLTVMLFVFLFS) threads the bilayer. At 289 to 638 (KQQRIKMLIL…STDQLNKIMP (350 aa)) the chain is on the cytoplasmic side. The interval 294–379 (KMLILPPVPV…HEKSHSNLGV (86 aa)) is required for JAK2 binding. The short motif at 297–305 (ILPPVPVPK) is the Box 1 motif element. Residues 340–349 (DSWVEFIELD) carry the UbE motif motif. Serine 341 bears the Phosphoserine mark. A disordered region spans residues 353 to 391 (PDEKTEESDTDRLLSSDHEKSHSNLGVKDGDSGRTSCCE). Residues 362 to 384 (TDRLLSSDHEKSHSNLGVKDGDS) show a composition bias toward basic and acidic residues. Phosphotyrosine; by JAK2 occurs at positions 487 and 595.

The protein belongs to the type I cytokine receptor family. Type 1 subfamily. In terms of assembly, on growth hormone (GH) binding, forms homodimers and binds JAK2 via a box 1-containing domain. Post-translationally, the soluble form (GHBP) is produced by phorbol ester-promoted proteolytic cleavage at the cell surface (shedding) by ADAM17/TACE. Shedding is inhibited by growth hormone (GH) binding to the receptor probably due to a conformational change in GHR rendering the receptor inaccessible to ADAM17. In terms of processing, on GH binding, phosphorylated on tyrosine residues in the cytoplasmic domain by JAK2. Ubiquitinated by the ECS(SOCS2) complex following ligand-binding and phosphorylation by JAK2, leading to its degradation by the proteasome. Regulation by the ECS(SOCS2) complex acts as a negative feedback loop of growth hormone receptor signaling. Ubiquitination is not sufficient for GHR internalization. As to expression, expressed in various tissues with high expression in liver and skeletal muscle. In terms of tissue distribution, isoform 2 is expressed in lung, stomach and muscle. Predominantly expressed in kidney, bladder, adrenal gland and brain stem. Highly expressed in placental villi.

The protein localises to the cell membrane. The protein resides in the secreted. Its function is as follows. Receptor for pituitary gland growth hormone (GH1) involved in regulating postnatal body growth. On ligand binding, couples to the JAK2/STAT5 pathway. In terms of biological role, the soluble form (GHBP) acts as a reservoir of growth hormone in plasma and may be a modulator/inhibitor of GH signaling. Functionally, up-regulates the production of the soluble Growth hormone-binding protein form (GHBP) and acts as a negative inhibitor of growth hormone signaling. This chain is Growth hormone receptor (GHR), found in Homo sapiens (Human).